A 180-amino-acid chain; its full sequence is DNA-directed RNA polymerase subunit Rpo7 (180 aa).

Residues 82-165 (QEVVEGEVLQ…RLPRIALTMR (84 aa)) form the S1 motif domain.

Belongs to the eukaryotic RPB7/RPC8 RNA polymerase subunit family. As to quaternary structure, part of the 13-subunit RNA polymerase complex. Forms a stalk with Rpo4 that extends from the main structure.

It localises to the cytoplasm. It carries out the reaction RNA(n) + a ribonucleoside 5'-triphosphate = RNA(n+1) + diphosphate. Its function is as follows. DNA-dependent RNA polymerase (RNAP) catalyzes the transcription of DNA into RNA using the four ribonucleoside triphosphates as substrates. The chain is DNA-directed RNA polymerase subunit Rpo7 from Saccharolobus solfataricus (strain ATCC 35092 / DSM 1617 / JCM 11322 / P2) (Sulfolobus solfataricus).